We begin with the raw amino-acid sequence, 562 residues long: uncharacterized protein (562 aa).

A run of 5 helical transmembrane segments spans residues 10-27 (IYPEIAVFLSLAIGYWVG), 34-53 (FSLGAVTATLLAAVVIGQFD), 63-85 (IFFLMFLFAVGYGIGPQFVQGIA), 92-114 (ALFAVVACLFSLLFPILCAKIAG), and 155-177 (FSVIPVAYAVTYIFGTVGSAIVL). RCK C-terminal domains lie at 204–288 (TENA…HPDS) and 290–377 (DETQ…QLGV). Helical transmembrane passes span 387-404 (VAFWAFAIVIGALLGSLV), 408-430 (GNLPLTLSTAGGVLIAGLIFSWV), 443-465 (PTVWFMNSVGLNVFIAAIGISAG), 475-497 (LGFSLFLWGVVATTLPLFFAALV), 504-526 (FHPAILLGCCAGARTTTASLGMI), and 539-561 (YTITYAVGNTLLTMWGLVLILIL).

It belongs to the AAE transporter (TC 2.A.81) family.

The protein resides in the cell membrane. This is an uncharacterized protein from Shewanella oneidensis (strain ATCC 700550 / JCM 31522 / CIP 106686 / LMG 19005 / NCIMB 14063 / MR-1).